A 506-amino-acid polypeptide reads, in one-letter code: ESX-5 secretion system ATPase EccB5 (506 aa).

The chain crosses the membrane as a helical span at residues 56–76; sequence VVASVSAALVICLGALLWSFI.

This sequence belongs to the EccB family. As to quaternary structure, part of the ESX-5 / type VII secretion system (T7SS), which is composed of cytosolic and membrane components. The ESX-5 membrane complex is composed of EccB5, EccC5, EccD5 and EccE5.

The protein resides in the cell inner membrane. Its function is as follows. An ATPase. Part of the ESX-5 specialized secretion system, which is responsible for the secretion of EsxN and a number of PE_PGRS and PPE proteins, including PPE41. This chain is ESX-5 secretion system ATPase EccB5, found in Mycobacterium tuberculosis (strain CDC 1551 / Oshkosh).